A 239-amino-acid polypeptide reads, in one-letter code: Large ribosomal subunit protein uL3 (239 aa).

2 disordered regions span residues 140-166 (SHRS…PGHM) and 211-239 (PLPK…QEGA). Q151 is subject to N5-methylglutamine.

Belongs to the universal ribosomal protein uL3 family. Part of the 50S ribosomal subunit. Forms a cluster with proteins L14 and L19. Post-translationally, methylated by PrmB.

Its function is as follows. One of the primary rRNA binding proteins, it binds directly near the 3'-end of the 23S rRNA, where it nucleates assembly of the 50S subunit. The protein is Large ribosomal subunit protein uL3 of Bradyrhizobium sp. (strain BTAi1 / ATCC BAA-1182).